We begin with the raw amino-acid sequence, 314 residues long: MSAAEAGGVFHRARGRTLDAFPAEKESEWKGPFYFILGADPQFGLMKAWSTGDCDNGGDEWEQEIRLTEQAVQAINKLNPKPKFFVLCGDLIHAMPGKPWRTEQTEDLKRVLRTVDRAIPLVLVSGNHDIGNAPTAETVDEFCRTWGDDYFSFWVGGVLFLVLNSQFYENPSKCPSLKQAQDQWLDEQLSIARQRHCQHAIIFQHIPLFLESIDEDDDYYFNLSKSTRKKLADKFIHAGVKVVFSGHYHRNAGGTYQNLDMVVSSAIGCQLGRDPHGLRVVVVTAEKIVHRYYSLDELSEKGIEDDLMDLIKKK.

Position 2 is a phosphoserine (Ser2). A catalytic region spans residues 47–250 (KAWSTGDCDN…KVVFSGHYHR (204 aa)). Positions 53, 90, 127, and 247 each coordinate a divalent metal cation. Position 294 is a phosphoserine (Ser294).

It belongs to the metallophosphoesterase superfamily. CPPED1 family. A divalent metal cation serves as cofactor.

The protein localises to the cytoplasm. It carries out the reaction O-phospho-L-seryl-[protein] + H2O = L-seryl-[protein] + phosphate. The catalysed reaction is O-phospho-L-threonyl-[protein] + H2O = L-threonyl-[protein] + phosphate. Functionally, protein phosphatase that dephosphorylates AKT family kinase specifically at 'Ser-473', blocking cell cycle progression and promoting cell apoptosis. May play an inhibitory role in glucose uptake by adipocytes. This Pongo abelii (Sumatran orangutan) protein is Serine/threonine-protein phosphatase CPPED1 (CPPED1).